Here is a 178-residue protein sequence, read N- to C-terminus: Large ribosomal subunit protein bL19 (178 aa).

This sequence belongs to the bacterial ribosomal protein bL19 family.

In terms of biological role, this protein is located at the 30S-50S ribosomal subunit interface and may play a role in the structure and function of the aminoacyl-tRNA binding site. This chain is Large ribosomal subunit protein bL19, found in Rhizobium etli (strain ATCC 51251 / DSM 11541 / JCM 21823 / NBRC 15573 / CFN 42).